We begin with the raw amino-acid sequence, 165 residues long: Protein YELLOW LEAF 1, choloroplastic (165 aa).

A chloroplast-targeting transit peptide spans 1-51 (MPPLATMSSPGSLLLLTPAVYQGIGRNRGGQSQEGQSISSSRSLKTKLSVS). Residues 71–118 (TQTARRKSFSGPTSPPSGSVKEKVRSPKLDDGGTGFPPFRFGGGGGGG) form a disordered region. Positions 79–89 (FSGPTSPPSGS) are enriched in low complexity. Positions 90-101 (VKEKVRSPKLDD) are enriched in basic and acidic residues.

As to quaternary structure, interacts with atpB. As to expression, highly expressed in leaves. Expressed in leaf sheaths. Expressed at low levels in stems.

The protein localises to the plastid. The protein resides in the chloroplast. In terms of biological role, required for photosynthetic protein complex assembly in chloroplast thylakoid membranes during leaf development. Maintains the abundance of the core protein complex PsaA-PsaB of photosystem I (PSI) in the thylakoid membrane. May play a role in the efficient biogenesis of the chloroplast ATP synthase complex, possibly by interacting with the beta subunit atpB. This chain is Protein YELLOW LEAF 1, choloroplastic, found in Oryza sativa subsp. japonica (Rice).